The primary structure comprises 89 residues: Small ribosomal subunit protein uS15 (89 aa).

Basic and acidic residues predominate over residues 1–11; the sequence is MSIAAERKAEV. The disordered stretch occupies residues 1–24; it reads MSIAAERKAEVIKTNATKAGDTGS.

It belongs to the universal ribosomal protein uS15 family. In terms of assembly, part of the 30S ribosomal subunit. Forms a bridge to the 50S subunit in the 70S ribosome, contacting the 23S rRNA.

In terms of biological role, one of the primary rRNA binding proteins, it binds directly to 16S rRNA where it helps nucleate assembly of the platform of the 30S subunit by binding and bridging several RNA helices of the 16S rRNA. Functionally, forms an intersubunit bridge (bridge B4) with the 23S rRNA of the 50S subunit in the ribosome. The chain is Small ribosomal subunit protein uS15 from Bradyrhizobium diazoefficiens (strain JCM 10833 / BCRC 13528 / IAM 13628 / NBRC 14792 / USDA 110).